The sequence spans 173 residues: Transcription factor E (173 aa).

One can recognise an HTH TFE/IIEalpha-type domain in the interval 9–92 (ADKAIFAYLH…LWELELDNMY (84 aa)).

This sequence belongs to the TFE family. Monomer. Interaction with RNA polymerase subunits RpoF and RpoE is necessary for Tfe stimulatory transcription activity. Able to interact with Tbp and RNA polymerase in the absence of DNA promoter. Interacts both with the preinitiation and elongation complexes.

Functionally, transcription factor that plays a role in the activation of archaeal genes transcribed by RNA polymerase. Facilitates transcription initiation by enhancing TATA-box recognition by TATA-box-binding protein (Tbp), and transcription factor B (Tfb) and RNA polymerase recruitment. Not absolutely required for transcription in vitro, but particularly important in cases where Tbp or Tfb function is not optimal. It dynamically alters the nucleic acid-binding properties of RNA polymerases by stabilizing the initiation complex and destabilizing elongation complexes. Seems to translocate with the RNA polymerase following initiation and acts by binding to the non template strand of the transcription bubble in elongation complexes. The protein is Transcription factor E of Methanospirillum hungatei JF-1 (strain ATCC 27890 / DSM 864 / NBRC 100397 / JF-1).